The following is a 388-amino-acid chain: UDP-galactose transporter senju (388 aa).

The next 10 membrane-spanning stretches (helical) occupy residues 13-33 (LTFVIFLLYMSLFIGQGIFVT), 46-66 (TVTVVLLTEVFKLIVSTCLYC), 84-104 (VLGLYMVPAFLYCLYNNLAFV), 113-133 (TYYLLLQLRVVVTGILFQIIF), 142-162 (WISLILLTLGCMMKQVDFGSF), 202-222 (FSLSAVFILAQTICSCLAGVY), 236-256 (IFVQNVFMYLDSIVCNAVILL), 276-296 (FSVLIIIVNNAAIGIVTSFFL), 309-329 (ALELLFTAVLCYFLFSIPIYM), and 331-351 (TALAIAVVSYAIYLYTQSPVV).

The protein belongs to the nucleotide-sugar transporter family.

The protein resides in the golgi apparatus membrane. Its function is as follows. UDP-galactose transporter involved in the synthesis of galactose-containing glycans. Plays a role in quiescence of the innate immune response, possibly by regulating glycosylation of the Toll pathway ligand spz. This is UDP-galactose transporter senju from Drosophila melanogaster (Fruit fly).